The chain runs to 937 residues: Alanine--tRNA ligase (937 aa).

Histidine 626, histidine 630, cysteine 727, and histidine 731 together coordinate Zn(2+).

It belongs to the class-II aminoacyl-tRNA synthetase family. The cofactor is Zn(2+).

The protein resides in the cytoplasm. The enzyme catalyses tRNA(Ala) + L-alanine + ATP = L-alanyl-tRNA(Ala) + AMP + diphosphate. Functionally, catalyzes the attachment of alanine to tRNA(Ala) in a two-step reaction: alanine is first activated by ATP to form Ala-AMP and then transferred to the acceptor end of tRNA(Ala). Also edits incorrectly charged Ser-tRNA(Ala) and Gly-tRNA(Ala) via its editing domain. The polypeptide is Alanine--tRNA ligase (Opitutus terrae (strain DSM 11246 / JCM 15787 / PB90-1)).